The primary structure comprises 727 residues: Phosphoribosylformylglycinamidine synthase subunit PurL (727 aa).

Residue His-47 is part of the active site. The ATP site is built by Tyr-50 and Lys-89. Glu-91 contributes to the Mg(2+) binding site. Substrate-binding positions include 92–95 (SHNH) and Arg-114. His-93 (proton acceptor) is an active-site residue. Asp-115 is a binding site for Mg(2+). Gln-238 lines the substrate pocket. Residue Asp-266 participates in Mg(2+) binding. 310 to 312 (ESQ) contributes to the substrate binding site. ATP is bound by residues Asp-490 and Gly-527. Asn-528 is a binding site for Mg(2+). Ser-530 serves as a coordination point for substrate.

This sequence belongs to the FGAMS family. In terms of assembly, monomer. Part of the FGAM synthase complex composed of 1 PurL, 1 PurQ and 2 PurS subunits.

It is found in the cytoplasm. The enzyme catalyses N(2)-formyl-N(1)-(5-phospho-beta-D-ribosyl)glycinamide + L-glutamine + ATP + H2O = 2-formamido-N(1)-(5-O-phospho-beta-D-ribosyl)acetamidine + L-glutamate + ADP + phosphate + H(+). It participates in purine metabolism; IMP biosynthesis via de novo pathway; 5-amino-1-(5-phospho-D-ribosyl)imidazole from N(2)-formyl-N(1)-(5-phospho-D-ribosyl)glycinamide: step 1/2. Its function is as follows. Part of the phosphoribosylformylglycinamidine synthase complex involved in the purines biosynthetic pathway. Catalyzes the ATP-dependent conversion of formylglycinamide ribonucleotide (FGAR) and glutamine to yield formylglycinamidine ribonucleotide (FGAM) and glutamate. The FGAM synthase complex is composed of three subunits. PurQ produces an ammonia molecule by converting glutamine to glutamate. PurL transfers the ammonia molecule to FGAR to form FGAM in an ATP-dependent manner. PurS interacts with PurQ and PurL and is thought to assist in the transfer of the ammonia molecule from PurQ to PurL. The protein is Phosphoribosylformylglycinamidine synthase subunit PurL of Acidiphilium cryptum (strain JF-5).